A 137-amino-acid polypeptide reads, in one-letter code: Nucleoside diphosphate kinase (137 aa).

Residues Lys-9, Phe-57, Arg-85, Thr-91, Arg-102, and Asn-112 each coordinate ATP. His-115 functions as the Pros-phosphohistidine intermediate in the catalytic mechanism.

It belongs to the NDK family. Homotetramer. The cofactor is Mg(2+).

It is found in the cytoplasm. The catalysed reaction is a 2'-deoxyribonucleoside 5'-diphosphate + ATP = a 2'-deoxyribonucleoside 5'-triphosphate + ADP. It catalyses the reaction a ribonucleoside 5'-diphosphate + ATP = a ribonucleoside 5'-triphosphate + ADP. In terms of biological role, major role in the synthesis of nucleoside triphosphates other than ATP. The ATP gamma phosphate is transferred to the NDP beta phosphate via a ping-pong mechanism, using a phosphorylated active-site intermediate. The protein is Nucleoside diphosphate kinase of Campylobacter curvus (strain 525.92).